The sequence spans 161 residues: Stress response protein YvgO (161 aa).

Residues 1-26 (MKRIRIPMTLALGAALTIAPLSFASA) form the signal peptide.

This Bacillus subtilis (strain 168) protein is Stress response protein YvgO (yvgO).